The following is a 582-amino-acid chain: Hemagglutinin-neuraminidase (582 aa).

A helical transmembrane segment spans residues 35 to 55 (ILVLSVQAVTLILVIVNLGEL). Cystine bridges form between Cys-178–Cys-202, Cys-192–Cys-253, and Cys-244–Cys-257. Residues Asn-284 and Asn-329 are each glycosylated (N-linked (GlcNAc...) asparagine; by host). Intrachain disulfides connect Cys-350-Cys-471, Cys-382-Cys-392, and Cys-465-Cys-475. 2 N-linked (GlcNAc...) asparagine; by host glycosylation sites follow: Asn-400 and Asn-448. Asn-507 carries an N-linked (GlcNAc...) asparagine; by host glycan. A disulfide bond links Cys-545 and Cys-556.

This sequence belongs to the paramyxoviruses hemagglutinin-neuraminidase family. Homotetramer; composed of disulfide-linked homodimers. Interacts with F protein trimer.

It is found in the virion membrane. Its subcellular location is the host cell membrane. The enzyme catalyses Hydrolysis of alpha-(2-&gt;3)-, alpha-(2-&gt;6)-, alpha-(2-&gt;8)- glycosidic linkages of terminal sialic acid residues in oligosaccharides, glycoproteins, glycolipids, colominic acid and synthetic substrates.. Its function is as follows. Attaches the virus to alpha-2,3-linked sialic acid-containing cell receptors and thereby initiating infection. Binding of HN protein to the receptor induces a conformational change that allows the F protein to trigger virion/cell membranes fusion. Binds to the glycan motifs sialyl Lewis (SLe) and GM2 ganglioside (GM2-glycan). Functionally, neuraminidase activity ensures the efficient spread of the virus by dissociating the mature virions from the neuraminic acid containing glycoproteins. This is Hemagglutinin-neuraminidase (HN) from Homo sapiens (Human).